The sequence spans 154 residues: UPF0547 protein C16orf87 homolog (154 aa).

Residues 46–119 (HPEKAPSSTE…KHEEEREKQE (74 aa)) form a disordered region. Residues 68 to 84 (VRREKINSTVNKDLENR) show a composition bias toward basic and acidic residues. Position 91 is a phosphoserine (Ser91). The stretch at 104 to 132 (KSASAKKHEEEREKQEKEIDIYANLSDEK) forms a coiled coil. A compositionally biased stretch (basic and acidic residues) spans 109–119 (KKHEEEREKQE).

It belongs to the UPF0547 family.

The polypeptide is UPF0547 protein C16orf87 homolog (Bos taurus (Bovine)).